A 427-amino-acid chain; its full sequence is Enolase (427 aa).

(2R)-2-phosphoglycerate is bound at residue Q163. E205 acts as the Proton donor in catalysis. Mg(2+)-binding residues include D242, E285, and D312. The (2R)-2-phosphoglycerate site is built by K337, R366, S367, and K388. Residue K337 is the Proton acceptor of the active site.

This sequence belongs to the enolase family. Mg(2+) is required as a cofactor.

It localises to the cytoplasm. The protein localises to the secreted. Its subcellular location is the cell surface. The catalysed reaction is (2R)-2-phosphoglycerate = phosphoenolpyruvate + H2O. The protein operates within carbohydrate degradation; glycolysis; pyruvate from D-glyceraldehyde 3-phosphate: step 4/5. Catalyzes the reversible conversion of 2-phosphoglycerate (2-PG) into phosphoenolpyruvate (PEP). It is essential for the degradation of carbohydrates via glycolysis. The chain is Enolase from Bradyrhizobium sp. (strain ORS 278).